A 612-amino-acid polypeptide reads, in one-letter code: Kelch repeat and BTB domain-containing protein 3 (612 aa).

One can recognise a BTB domain in the interval 52–119; the sequence is YDFKIIMKDE…AYTGKTKITD (68 aa). One can recognise a BACK domain in the interval 154–254; it reads CLQLLSISDS…QLSEETLQDC (101 aa). Kelch repeat units follow at residues 295-341, 343-403, 404-454, 456-506, and 552-599; these read KYIF…SSYG, KIFL…MALD, RLFV…TCQN, IYVL…KAVP, and KIYI…VIQF.

This chain is Kelch repeat and BTB domain-containing protein 3, found in Homo sapiens (Human).